The chain runs to 383 residues: S-(hydroxymethyl)glutathione dehydrogenase (383 aa).

A Zn(2+)-binding site is contributed by Cys-51. His-52 contacts NAD(+). Zn(2+) contacts are provided by His-73, Glu-74, Cys-103, Cys-106, Cys-109, Cys-117, and Cys-180. Residues 205 to 210 (GAGCVG), Asp-229, and 298 to 300 (IGV) each bind NAD(+).

It belongs to the zinc-containing alcohol dehydrogenase family. Class-III subfamily. It depends on Zn(2+) as a cofactor.

It carries out the reaction a primary alcohol + NAD(+) = an aldehyde + NADH + H(+). It catalyses the reaction a secondary alcohol + NAD(+) = a ketone + NADH + H(+). The enzyme catalyses S-(hydroxymethyl)glutathione + NADP(+) = S-formylglutathione + NADPH + H(+). The catalysed reaction is S-(hydroxymethyl)glutathione + NAD(+) = S-formylglutathione + NADH + H(+). It carries out the reaction S-nitrosoglutathione + NADH + H(+) = S-(hydroxysulfenamide)glutathione + NAD(+). Its function is as follows. Oxidizes long-chain alcohols and, in the presence of glutathione, is able to oxidize formaldehyde. Also acts as a S-nitroso-glutathione reductase by catalyzing the NADH-dependent reduction of S-nitrosoglutathione, thereby regulating protein S-nitrosylation. The protein is S-(hydroxymethyl)glutathione dehydrogenase (FDH1) of Aspergillus oryzae (strain ATCC 42149 / RIB 40) (Yellow koji mold).